We begin with the raw amino-acid sequence, 274 residues long: Thiamine kinase (274 aa).

Belongs to the thiamine kinase family.

The catalysed reaction is thiamine + ATP = thiamine phosphate + ADP + H(+). It functions in the pathway cofactor biosynthesis; thiamine diphosphate biosynthesis; thiamine phosphate from thiamine: step 1/1. In terms of biological role, catalyzes the ATP-dependent phosphorylation of thiamine to thiamine phosphate. Is involved in thiamine salvage. The chain is Thiamine kinase from Escherichia coli (strain SMS-3-5 / SECEC).